A 134-amino-acid chain; its full sequence is uncharacterized protein (134 aa).

It is found in the cell membrane. Functionally, may have a role in the regulation of NDH-1 biosynthesis. This is an uncharacterized protein from Paracoccus denitrificans.